Consider the following 212-residue polypeptide: Ribonuclease HII (212 aa).

Positions 12 to 201 (ELVAGVDEVG…VRAMLEQVSI (190 aa)) constitute an RNase H type-2 domain. Asp-18, Glu-19, and Asp-110 together coordinate a divalent metal cation.

It belongs to the RNase HII family. Mn(2+) serves as cofactor. It depends on Mg(2+) as a cofactor.

The protein resides in the cytoplasm. The enzyme catalyses Endonucleolytic cleavage to 5'-phosphomonoester.. Functionally, endonuclease that specifically degrades the RNA of RNA-DNA hybrids. The protein is Ribonuclease HII of Stutzerimonas stutzeri (strain A1501) (Pseudomonas stutzeri).